A 254-amino-acid chain; its full sequence is 5-oxoprolinase subunit A (254 aa).

It belongs to the LamB/PxpA family. Forms a complex composed of PxpA, PxpB and PxpC.

It carries out the reaction 5-oxo-L-proline + ATP + 2 H2O = L-glutamate + ADP + phosphate + H(+). In terms of biological role, catalyzes the cleavage of 5-oxoproline to form L-glutamate coupled to the hydrolysis of ATP to ADP and inorganic phosphate. The sequence is that of 5-oxoprolinase subunit A from Acinetobacter baylyi (strain ATCC 33305 / BD413 / ADP1).